Reading from the N-terminus, the 325-residue chain is ATPase GET3 (325 aa).

34-41 (KGGVGKTT) contacts ATP. D63 is an active-site residue. The ATP site is built by E243 and N270. Zn(2+) is bound by residues C281 and C284.

The protein belongs to the arsA ATPase family. As to quaternary structure, homodimer.

It is found in the cytoplasm. The protein localises to the endoplasmic reticulum. ATPase required for the post-translational delivery of tail-anchored (TA) proteins to the endoplasmic reticulum. Recognizes and selectively binds the transmembrane domain of TA proteins in the cytosol. This complex then targets to the endoplasmic reticulum by membrane-bound receptors, where the tail-anchored protein is released for insertion. This process is regulated by ATP binding and hydrolysis. ATP binding drives the homodimer towards the closed dimer state, facilitating recognition of newly synthesized TA membrane proteins. ATP hydrolysis is required for insertion. Subsequently, the homodimer reverts towards the open dimer state, lowering its affinity for the membrane-bound receptor, and returning it to the cytosol to initiate a new round of targeting. This is ATPase GET3 from Coccidioides posadasii (strain C735) (Valley fever fungus).